The sequence spans 234 residues: N-(5'-phosphoribosyl)anthranilate isomerase 1 (234 aa).

This sequence belongs to the TrpF family.

The enzyme catalyses N-(5-phospho-beta-D-ribosyl)anthranilate = 1-(2-carboxyphenylamino)-1-deoxy-D-ribulose 5-phosphate. It participates in amino-acid biosynthesis; L-tryptophan biosynthesis; L-tryptophan from chorismate: step 3/5. In Methanosarcina mazei (strain ATCC BAA-159 / DSM 3647 / Goe1 / Go1 / JCM 11833 / OCM 88) (Methanosarcina frisia), this protein is N-(5'-phosphoribosyl)anthranilate isomerase 1 (trpF1).